The chain runs to 242 residues: MSGHSKFANIKHKKEKNDATKGKIFTRLGREIAVAVKEGGPDPNNNNKLKDIVAKAKANNMPNDTIDRSIKKAAGEGNAVNYEFVTYEGYGPSGTAIIVEALTDNKNRTAANVRNAFTKGNGSVGTQGCVSYMFDQKGQIIIDKEECDMASDDLMMLALDAGASDFNEEDDSFEVLTEPDDFSVVRETLEKAGVPMMQAEVTMIPQTWVELSDETDLKNINRTLDLLDEDDDVQQVYHNWDE.

Belongs to the TACO1 family.

It localises to the cytoplasm. In Lachnoclostridium phytofermentans (strain ATCC 700394 / DSM 18823 / ISDg) (Clostridium phytofermentans), this protein is Probable transcriptional regulatory protein Cphy_2507.